We begin with the raw amino-acid sequence, 276 residues long: 4-hydroxy-tetrahydrodipicolinate reductase (276 aa).

NAD(+) contacts are provided by residues Gly-18–Met-23 and Asp-44. Arg-45 contributes to the NADP(+) binding site. Residues Gly-107 to Thr-109 and Ala-131 to Met-134 contribute to the NAD(+) site. The active-site Proton donor/acceptor is His-164. His-165 serves as a coordination point for (S)-2,3,4,5-tetrahydrodipicolinate. Lys-168 serves as the catalytic Proton donor. Gly-174–Thr-175 serves as a coordination point for (S)-2,3,4,5-tetrahydrodipicolinate.

This sequence belongs to the DapB family.

It localises to the cytoplasm. It catalyses the reaction (S)-2,3,4,5-tetrahydrodipicolinate + NAD(+) + H2O = (2S,4S)-4-hydroxy-2,3,4,5-tetrahydrodipicolinate + NADH + H(+). The enzyme catalyses (S)-2,3,4,5-tetrahydrodipicolinate + NADP(+) + H2O = (2S,4S)-4-hydroxy-2,3,4,5-tetrahydrodipicolinate + NADPH + H(+). Its pathway is amino-acid biosynthesis; L-lysine biosynthesis via DAP pathway; (S)-tetrahydrodipicolinate from L-aspartate: step 4/4. Catalyzes the conversion of 4-hydroxy-tetrahydrodipicolinate (HTPA) to tetrahydrodipicolinate. This Aromatoleum aromaticum (strain DSM 19018 / LMG 30748 / EbN1) (Azoarcus sp. (strain EbN1)) protein is 4-hydroxy-tetrahydrodipicolinate reductase.